The primary structure comprises 399 residues: Probable peptidoglycan glycosyltransferase FtsW (399 aa).

Transmembrane regions (helical) follow at residues 33-53 (LVWL…STSI), 71-91 (IFYF…PIIF), 98-118 (IILI…HSIH), 160-180 (FWGF…LLAE), 182-202 (DLGT…LSGA), 204-224 (IGQF…LILL), 287-307 (IIGE…IFTI), 324-344 (IFSG…TSIN), and 359-379 (LPFI…IFFL).

It belongs to the SEDS family. FtsW subfamily.

Its subcellular location is the cell inner membrane. It carries out the reaction [GlcNAc-(1-&gt;4)-Mur2Ac(oyl-L-Ala-gamma-D-Glu-L-Lys-D-Ala-D-Ala)](n)-di-trans,octa-cis-undecaprenyl diphosphate + beta-D-GlcNAc-(1-&gt;4)-Mur2Ac(oyl-L-Ala-gamma-D-Glu-L-Lys-D-Ala-D-Ala)-di-trans,octa-cis-undecaprenyl diphosphate = [GlcNAc-(1-&gt;4)-Mur2Ac(oyl-L-Ala-gamma-D-Glu-L-Lys-D-Ala-D-Ala)](n+1)-di-trans,octa-cis-undecaprenyl diphosphate + di-trans,octa-cis-undecaprenyl diphosphate + H(+). It functions in the pathway cell wall biogenesis; peptidoglycan biosynthesis. Functionally, peptidoglycan polymerase that is essential for cell division. The chain is Probable peptidoglycan glycosyltransferase FtsW from Buchnera aphidicola subsp. Acyrthosiphon pisum (strain APS) (Acyrthosiphon pisum symbiotic bacterium).